Consider the following 447-residue polypeptide: UPF0328 protein ECU10_1870 (447 aa).

2 stretches are compositionally biased toward basic and acidic residues: residues 1–10 (MPSDHPDFRS) and 64–84 (HTEGCHTHEANPEPNTKHTET). Disordered stretches follow at residues 1 to 103 (MPSD…TATP) and 147 to 173 (VKSQSVSHRAPITYQPPRPTTTSNPRI). A compositionally biased stretch (pro residues) spans 92–103 (CPPPHPGPTATP).

It belongs to the UPF0328 family.

In Encephalitozoon cuniculi (strain GB-M1) (Microsporidian parasite), this protein is UPF0328 protein ECU10_1870.